The sequence spans 394 residues: HORMA domain-containing protein 1 (394 aa).

The 203-residue stretch at 24–226 (QQSLVLVKRL…TPFHTFKVKV (203 aa)) folds into the HORMA domain. The disordered stretch occupies residues 306–394 (KESPELSISH…RKFSEPKEHI (89 aa)). Residues 311-325 (LSISHSQVEQLVSKT) show a composition bias toward polar residues. Positions 353–362 (KSKESRKRSQ) are enriched in basic and acidic residues. At Ser-376 the chain carries Phosphoserine. The Nuclear localization signal motif lies at 383–386 (KRRK).

Interacts with HORMAD2. Interacts with IHO1. In terms of processing, phosphorylated at Ser-377 in a SPO11-dependent manner.

It is found in the nucleus. Its subcellular location is the chromosome. Functionally, plays a key role in meiotic progression. Regulates 3 different functions during meiosis: ensures that sufficient numbers of processed DNA double-strand breaks (DSBs) are available for successful homology search by increasing the steady-state numbers of single-stranded DSB ends. Promotes synaptonemal-complex formation independently of its role in homology search. Plays a key role in the male mid-pachytene checkpoint and the female meiotic prophase checkpoint: required for efficient build-up of ATR activity on unsynapsed chromosome regions, a process believed to form the basis of meiotic silencing of unsynapsed chromatin (MSUC) and meiotic prophase quality control in both sexes. In Sus scrofa (Pig), this protein is HORMA domain-containing protein 1 (HORMAD1).